We begin with the raw amino-acid sequence, 279 residues long: ATP-dependent Clp protease proteolytic subunit-related protein 2, chloroplastic (279 aa).

The transit peptide at Met1 to Gln54 directs the protein to the chloroplast.

It belongs to the peptidase S14 family. In terms of assembly, component of the chloroplastic Clp protease core complex which consist of at least 16 proteins: CLPP4 (3 copies), CLPP5 (3 copies), CLPR4 (2 copies), ClpP1 (1 copy), CLPP6 (1 copy), CLPR2 (1 copy), CLPT1 (1 copy), CLPT2 (1 copy) and 3 copies of CLPP3 and/or CLPR1 and/or CLPR3. The core complex is organized in two heptameric rings, one containing CLPP3,4,5,6 in a 1:2:3:1 ratio and the other CLPP1 and CLPR1,2,3,4 in a 3:1:1:1:1 ratio. Expressed at least in leaves and roots.

Its subcellular location is the plastid. The protein localises to the chloroplast. Its function is as follows. Required for chloroplast development and integrity. Involved in the regulation of plastoglobules formation. This chain is ATP-dependent Clp protease proteolytic subunit-related protein 2, chloroplastic, found in Arabidopsis thaliana (Mouse-ear cress).